The chain runs to 150 residues: D-aminoacyl-tRNA deacylase (150 aa).

Positions 138 to 139 match the Gly-cisPro motif, important for rejection of L-amino acids motif; sequence GP.

It belongs to the DTD family. In terms of assembly, homodimer.

The protein resides in the cytoplasm. The catalysed reaction is glycyl-tRNA(Ala) + H2O = tRNA(Ala) + glycine + H(+). It catalyses the reaction a D-aminoacyl-tRNA + H2O = a tRNA + a D-alpha-amino acid + H(+). Functionally, an aminoacyl-tRNA editing enzyme that deacylates mischarged D-aminoacyl-tRNAs. Also deacylates mischarged glycyl-tRNA(Ala), protecting cells against glycine mischarging by AlaRS. Acts via tRNA-based rather than protein-based catalysis; rejects L-amino acids rather than detecting D-amino acids in the active site. By recycling D-aminoacyl-tRNA to D-amino acids and free tRNA molecules, this enzyme counteracts the toxicity associated with the formation of D-aminoacyl-tRNA entities in vivo and helps enforce protein L-homochirality. The polypeptide is D-aminoacyl-tRNA deacylase (Bacteroides fragilis (strain ATCC 25285 / DSM 2151 / CCUG 4856 / JCM 11019 / LMG 10263 / NCTC 9343 / Onslow / VPI 2553 / EN-2)).